The sequence spans 121 residues: Flagellar protein FliT (121 aa).

Residues 1–50 are required for homodimerization; the sequence is MNHAPHLYFAWQQLVDKSQLMLRLATEEQWDELIASEMAYVNAVQEIAHL. A fliD binding region spans residues 60 to 98; it reads MQEQLRPMLRLILDNESKVKQLLQIRMDELAKLVGQSSV.

The protein belongs to the FliT family. In terms of assembly, homodimer. Interacts with FliD and FlhC.

Its subcellular location is the cytoplasm. The protein resides in the cytosol. In terms of biological role, dual-function protein that regulates the transcription of class 2 flagellar operons and that also acts as an export chaperone for the filament-capping protein FliD. As a transcriptional regulator, acts as an anti-FlhDC factor; it directly binds FlhC, thus inhibiting the binding of the FlhC/FlhD complex to class 2 promoters, resulting in decreased expression of class 2 flagellar operons. As a chaperone, effects FliD transition to the membrane by preventing its premature polymerization, and by directing it to the export apparatus. This Shigella sonnei (strain Ss046) protein is Flagellar protein FliT.